Here is a 155-residue protein sequence, read N- to C-terminus: Probable cyclic pyranopterin monophosphate synthase (155 aa).

Substrate is bound by residues 74–76 (MCH) and 110–111 (ME). Residue D125 is part of the active site.

It belongs to the MoaC family. Homohexamer; trimer of dimers.

The catalysed reaction is (8S)-3',8-cyclo-7,8-dihydroguanosine 5'-triphosphate = cyclic pyranopterin phosphate + diphosphate. It participates in cofactor biosynthesis; molybdopterin biosynthesis. Its function is as follows. Catalyzes the conversion of (8S)-3',8-cyclo-7,8-dihydroguanosine 5'-triphosphate to cyclic pyranopterin monophosphate (cPMP). This chain is Probable cyclic pyranopterin monophosphate synthase, found in Methanoregula boonei (strain DSM 21154 / JCM 14090 / 6A8).